The sequence spans 308 residues: Very-long-chain enoyl-CoA reductase (308 aa).

The Cytoplasmic segment spans residues 1-86 (MKHYEVEILD…YFRDLGAQIS (86 aa)). Position 22 is an N6-acetyllysine (K22). S58 carries the phosphoserine modification. An N6-acetyllysine modification is found at K60. Residues 87 to 106 (WVTVFLTEYAGPLFIYLLFY) traverse the membrane as a helical segment. At 107–124 (FRVPFIYGHKYDFTSSRH) the chain is on the lumenal side. A helical transmembrane segment spans residues 125-147 (TVVHLACICHSFHYIKRLLETLF). At 148 to 158 (VHRFSHGTMPL) the chain is on the cytoplasmic side. A helical membrane pass occupies residues 159–180 (RNIFKNCTYYWGFAAWMAYYIN). Residues 181–189 (HPLYTPPTY) are Lumenal-facing. A helical membrane pass occupies residues 190 to 216 (GAQQVKLALAIFVICQLGNFSIHMALR). Topologically, residues 217 to 245 (DLRPAGSKTRKIPYPTKNPFTWLFLLVSC) are cytoplasmic. Residues 246 to 262 (PNYTYEVGSWIGFAIMT) form a helical membrane-spanning segment. Topologically, residues 263 to 264 (QC) are lumenal. A helical membrane pass occupies residues 265–292 (LPVALFSLVGFTQMTIWAKGKHRSYLKE). Over 293–308 (FRDYPPLRMPIIPFLL) the chain is Cytoplasmic.

This sequence belongs to the steroid 5-alpha reductase family. Interacts with ELOVL1 and LASS2. Interacts with HACD1 and HACD2 (via the third lumenal loop), but not with HACD3 and HACD4. Interacts with ELOVL1, ELOVL2, ELOVL3, ELOVL5 and ELOVL7 in the presence of acyl-CoA; interaction with HACD1/2 and that with ELOVLs are mutually exclusive. Glycosylated. In terms of tissue distribution, expressed in most tissues tested. Highly expressed in skeletal muscle.

It localises to the endoplasmic reticulum membrane. The enzyme catalyses a very-long-chain 2,3-saturated fatty acyl-CoA + NADP(+) = a very-long-chain (2E)-enoyl-CoA + NADPH + H(+). It carries out the reaction octadecanoyl-CoA + NADP(+) = (2E)-octadecenoyl-CoA + NADPH + H(+). The catalysed reaction is (2E,7Z,10Z,13Z,16Z)-docosapentaenoyl-CoA + NADPH + H(+) = (7Z,10Z,13Z,16Z)-docosatetraenoyl-CoA + NADP(+). It catalyses the reaction (2E,7Z,10Z,13Z,16Z,19Z)-docosahexaenoyl-CoA + NADPH + H(+) = (7Z,10Z,13Z,16Z,19Z)-docosapentaenoyl-CoA + NADP(+). The enzyme catalyses (2E,8Z,11Z,14Z)-eicosatetraenoyl-CoA + NADPH + H(+) = (8Z,11Z,14Z)-eicosatrienoyl-CoA + NADP(+). It carries out the reaction (2E)-hexadecenoyl-CoA + NADPH + H(+) = hexadecanoyl-CoA + NADP(+). It participates in lipid metabolism; fatty acid biosynthesis. It functions in the pathway lipid metabolism; sphingolipid metabolism. Its function is as follows. Involved in both the production of very long-chain fatty acids for sphingolipid synthesis and the degradation of the sphingosine moiety in sphingolipids through the sphingosine 1-phosphate metabolic pathway. Catalyzes the last of the four reactions of the long-chain fatty acids elongation cycle. This endoplasmic reticulum-bound enzymatic process, allows the addition of 2 carbons to the chain of long- and very long-chain fatty acids/VLCFAs per cycle. This enzyme reduces the trans-2,3-enoyl-CoA fatty acid intermediate to an acyl-CoA that can be further elongated by entering a new cycle of elongation. Thereby, it participates in the production of VLCFAs of different chain lengths that are involved in multiple biological processes as precursors of membrane lipids and lipid mediators. Catalyzes the saturation step of the sphingosine 1-phosphate metabolic pathway, the conversion of trans-2-hexadecenoyl-CoA to palmitoyl-CoA. The polypeptide is Very-long-chain enoyl-CoA reductase (TECR) (Homo sapiens (Human)).